The following is a 350-amino-acid chain: Biotin synthase (350 aa).

Residues 41 to 268 (NEVQISRLLS…KSRVRLSAGR (228 aa)) form the Radical SAM core domain. Positions 56, 60, and 63 each coordinate [4Fe-4S] cluster. [2Fe-2S] cluster contacts are provided by Cys-100, Cys-131, Cys-191, and Arg-263.

It belongs to the radical SAM superfamily. Biotin synthase family. As to quaternary structure, homodimer. Requires [4Fe-4S] cluster as cofactor. The cofactor is [2Fe-2S] cluster.

It carries out the reaction (4R,5S)-dethiobiotin + (sulfur carrier)-SH + 2 reduced [2Fe-2S]-[ferredoxin] + 2 S-adenosyl-L-methionine = (sulfur carrier)-H + biotin + 2 5'-deoxyadenosine + 2 L-methionine + 2 oxidized [2Fe-2S]-[ferredoxin]. Its pathway is cofactor biosynthesis; biotin biosynthesis; biotin from 7,8-diaminononanoate: step 2/2. Catalyzes the conversion of dethiobiotin (DTB) to biotin by the insertion of a sulfur atom into dethiobiotin via a radical-based mechanism. In Shewanella frigidimarina (strain NCIMB 400), this protein is Biotin synthase.